A 225-amino-acid polypeptide reads, in one-letter code: MPDIEYLKKLALIGAVNKTVKVSSSEFHKHTGDSSKTAARKLKQLEKERLIERELVPGGQLIKMTEKGIEILKNEYVEYSRIFSSEPDTLELEGNVLKGLGEGQYYINIPGYRTQFEEKLHFIPFPGTLNVQLSENSSALRNRLREMPSVRIDGFNDGERTFGGGNCYPVRVEGIDAAVVVPDRTHYPSDLIEIIAPVKLRDALKLKDGDRVVTQLKKQGMEGQK.

Residues 1 to 89 (MPDIEYLKKL…SRIFSSEPDT (89 aa)) form a unknown region. The segment at 90–225 (LELEGNVLKG…LKKQGMEGQK (136 aa)) is riboflavin kinase. Residue 99 to 104 (GLGEGQ) coordinates CDP. Residues threonine 128 and asparagine 130 each contribute to the Mg(2+) site. FMN-binding residues include threonine 185 and glutamate 193. 198-201 (VKLR) contributes to the CDP binding site.

Belongs to the archaeal riboflavin kinase family. The cofactor is Mg(2+).

It carries out the reaction riboflavin + CTP = CDP + FMN + H(+). Its pathway is cofactor biosynthesis; FMN biosynthesis; FMN from riboflavin (CTP route): step 1/1. Functionally, catalyzes the CTP-dependent phosphorylation of riboflavin (vitamin B2) to form flavin mononucleotide (FMN). The protein is Riboflavin kinase (ribK) of Methanosarcina mazei (strain ATCC BAA-159 / DSM 3647 / Goe1 / Go1 / JCM 11833 / OCM 88) (Methanosarcina frisia).